The chain runs to 477 residues: tRNA-2-methylthio-N(6)-dimethylallyladenosine synthase (477 aa).

The region spanning 13 to 130 (GGLFIKTYGC…LPAMIEEALA (118 aa)) is the MTTase N-terminal domain. [4Fe-4S] cluster is bound by residues Cys-22, Cys-59, Cys-93, Cys-178, Cys-182, and Cys-185. Residues 164–396 (ESNGVSAFVS…QAMLNEQTAA (233 aa)) form the Radical SAM core domain. In terms of domain architecture, TRAM spans 399–462 (EGMVGTTQRV…ANSLKGKLVA (64 aa)).

Belongs to the methylthiotransferase family. MiaB subfamily. In terms of assembly, monomer. [4Fe-4S] cluster is required as a cofactor.

It is found in the cytoplasm. The enzyme catalyses N(6)-dimethylallyladenosine(37) in tRNA + (sulfur carrier)-SH + AH2 + 2 S-adenosyl-L-methionine = 2-methylsulfanyl-N(6)-dimethylallyladenosine(37) in tRNA + (sulfur carrier)-H + 5'-deoxyadenosine + L-methionine + A + S-adenosyl-L-homocysteine + 2 H(+). Functionally, catalyzes the methylthiolation of N6-(dimethylallyl)adenosine (i(6)A), leading to the formation of 2-methylthio-N6-(dimethylallyl)adenosine (ms(2)i(6)A) at position 37 in tRNAs that read codons beginning with uridine. This is tRNA-2-methylthio-N(6)-dimethylallyladenosine synthase from Hydrogenovibrio crunogenus (strain DSM 25203 / XCL-2) (Thiomicrospira crunogena).